A 298-amino-acid polypeptide reads, in one-letter code: GTPase Era (298 aa).

The 168-residue stretch at 3–170 folds into the Era-type G domain; the sequence is KSGFVAILGR…IKLLTDNLEE (168 aa). A G1 region spans residues 11–18; the sequence is GRPNVGKS. Position 11–18 (11–18) interacts with GTP; that stretch reads GRPNVGKS. Residues 37-41 form a G2 region; that stretch reads QTTRN. Positions 58-61 are G3; it reads DTPG. Residues 58-62 and 120-123 contribute to the GTP site; these read DTPGI and NKID. Positions 120 to 123 are G4; the sequence is NKID. The tract at residues 149 to 151 is G5; that stretch reads ISA. One can recognise a KH type-2 domain in the interval 201-279; sequence TQQEVPHSVA…YLETWVKVKK (79 aa).

Belongs to the TRAFAC class TrmE-Era-EngA-EngB-Septin-like GTPase superfamily. Era GTPase family. In terms of assembly, monomer.

It localises to the cytoplasm. The protein localises to the cell membrane. An essential GTPase that binds both GDP and GTP, with rapid nucleotide exchange. Plays a role in 16S rRNA processing and 30S ribosomal subunit biogenesis and possibly also in cell cycle regulation and energy metabolism. This chain is GTPase Era, found in Streptococcus pyogenes serotype M4 (strain MGAS10750).